Reading from the N-terminus, the 266-residue chain is Signal peptidase I (266 aa).

At 1–20 (MQTDNTKSNTNKTAKQEWGS) the chain is on the cytoplasmic side. Residues 21–41 (FVFVICIALLIRILIMEPFTV) form a helical membrane-spanning segment. At 42–266 (PTGSMKATIL…IFRNLYNTDV (225 aa)) the chain is on the periplasmic side. Catalysis depends on residues Ser45 and Lys108.

It belongs to the peptidase S26 family.

It is found in the cell inner membrane. The enzyme catalyses Cleavage of hydrophobic, N-terminal signal or leader sequences from secreted and periplasmic proteins.. This chain is Signal peptidase I (lepB), found in Rickettsia massiliae (strain Mtu5).